The primary structure comprises 401 residues: MRGRSLTLSRVKLELARRSMSATSVPSMADFLTKKPYSPPSWASHLRPLPSHTFSLAHLPTPIHRWNLPGLPNGTELWIKRDDFTGMELSGNKVRKLEFLMAEAVDQHADTVITIGGIQSNHCRATATASNYLNLNSHLILRTSKLLADEDPGLVGNLLVERLVGANVHLISKEEYSSIGSEALTNALKEKLEKEGKKPYVIPVGGSNSLGTWGYIEAAREIEEQLNYRPDDLKFDDIVVACGSGGTIAGISLGSWLGALKAKVHAFSVCDDPDYFYDFVQGLLDGLHAGVNSRDIVNIHNAKGKGYAMNTSEELEFVKKVASSTGVILDPVYSGKAAYGLINEITKDPKCWEGRKILFIHTGGLLGLYDKVDQMASLMGNWSRMDVSESVPRKDGVGKMF.

The N-terminal 37 residues, 1-37, are a transit peptide targeting the mitochondrion; sequence MRGRSLTLSRVKLELARRSMSATSVPSMADFLTKKPY. An N-acetylserine modification is found at R2. The residue at position 93 (K93) is an N6-(pyridoxal phosphate)lysine. The active-site Nucleophile is the S120.

It belongs to the ACC deaminase/D-cysteine desulfhydrase family. It depends on pyridoxal 5'-phosphate as a cofactor. As to expression, highly expressed in stems and cauline leaves, and at lower levels in roots, rosette leaves and flowers.

The protein resides in the mitochondrion. It carries out the reaction D-cysteine + H2O = hydrogen sulfide + pyruvate + NH4(+) + H(+). The catalysed reaction is 1-aminocyclopropane-1-carboxylate + H2O = 2-oxobutanoate + NH4(+). Its function is as follows. Catalyzes the production of hydrogen sulfide (H2S) from cysteine. Is mainly responsible for the degradation of cysteine to generate H2S, a regulator of stomatal movement and closure. Has high affinity for D-cysteine. Functionally, possesses 1-aminocyclopropane-1-carboxylic acid (ACC) deaminase activity. Acts as a regulator of ACC levels and causes changes in ethylene levels. In Arabidopsis thaliana (Mouse-ear cress), this protein is Bifunctional D-cysteine desulfhydrase/1-aminocyclopropane-1-carboxylate deaminase, mitochondrial (DCD).